A 382-amino-acid polypeptide reads, in one-letter code: Zinc metalloproteinase nas-7 (382 aa).

Positions 1–18 (MLLPWIITIVTVIPATLG) are cleaved as a signal peptide. A propeptide spanning residues 19–79 (HRNRVQDDEM…DIRLPRRHKR (61 aa)) is cleaved from the precursor. The Peptidase M12A domain occupies 80-273 (NGVSRAAKLW…SKINRMYNCP (194 aa)). 5 disulfide bridges follow: C122–C272, C144–C163, C348–C382, C355–C375, and C362–C379. H171 is a binding site for Zn(2+). E172 is an active-site residue. The Zn(2+) site is built by H175 and H181. Positions 348-382 (CEDRITVCWWTADRCRSPAIYQVMSSLCPKTCKFC) constitute a ShKT domain.

Zn(2+) serves as cofactor. Expressed in the head of adult hermaphrodites but not within pharynx cells. Expressed in pharyngeal muscles, mc cells, intestine, hypodermal seam cells, arcade cells, spermatheca, vulva and rectal epithelial cells.

Its subcellular location is the secreted. Its function is as follows. Metalloprotease. This chain is Zinc metalloproteinase nas-7 (nas-7), found in Caenorhabditis elegans.